The chain runs to 248 residues: MIHKKISIMETNINLKVDDDKYINLAKNTILRERANIQNYILDYPEFLTSYTPIKVSPDAPAIVKTMAKAGEIAAVGPMASVAGTISEFIVKNAVEYGCKNIISENGGDIALKTEKSVVVGLYAGSSPLSYTIGFKINEDKANNGYGVCTSSGTVGHSVSFGNADAIVVFAKKASIADASATSIGNFAVGAPDDAINKCLEKAEDIEYIDGVFVVMGEFAGKMGKIPQMVKTDEKIVKTSMGEYFDMI.

It belongs to the UPF0280 family.

This chain is UPF0280 protein Maeo_0343, found in Methanococcus aeolicus (strain ATCC BAA-1280 / DSM 17508 / OCM 812 / Nankai-3).